The following is a 254-amino-acid chain: MSQLMIDAQQVCKNYGRLEVLKGIDLQVPKGTVTCLIGPSGSGKSTMLRCVNHLEKVNAGRLYVDGDLIGYRERDGVLYEISEKDAAKQRSDIGMVFQNFNLFPHRTVIENIIEAPIHVKKQPESKARARAMELLEQVGLAHKADAYPVQLSGGQQQRVAIARAVAMEPKLMLFDEPTSALDPELVGEVLRVMKQLADDGMTMLVVTHEMGFAHEVADQVVFMADGVVVEAGTPEQVLDNPKEQRTKDFLSSLL.

Residues 6–250 form the ABC transporter domain; the sequence is IDAQQVCKNY…PKEQRTKDFL (245 aa). 38-45 lines the ATP pocket; that stretch reads GPSGSGKS.

The protein belongs to the ABC transporter superfamily. As to quaternary structure, the complex is probably composed of two ATP-binding proteins (ArgV), two transmembrane proteins (ArgU) and a solute-binding protein (ArgT).

It is found in the cell membrane. It carries out the reaction a polar amino acid(out) + ATP + H2O = a polar amino acid(in) + ADP + phosphate + H(+). The enzyme catalyses L-arginine(out) + ATP + H2O = L-arginine(in) + ADP + phosphate + H(+). In terms of biological role, part of the ABC transporter complex ArgTUV involved in L-arginine import. May also transport L-citrulline. Probably responsible for energy coupling to the transport system. The polypeptide is Arginine transport ATP-binding protein ArgV (Corynebacterium glutamicum (strain ATCC 13032 / DSM 20300 / JCM 1318 / BCRC 11384 / CCUG 27702 / LMG 3730 / NBRC 12168 / NCIMB 10025 / NRRL B-2784 / 534)).